Reading from the N-terminus, the 915-residue chain is Nitrate reductase [NADH] (915 aa).

Positions 1–102 (MAASVEPRQP…PRDEGTADAW (102 aa)) are disordered. Over residues 16-26 (APATAPTARAP) the composition is skewed to low complexity. The segment covering 57–71 (AEEEEDDDDEDDEGH) has biased composition (acidic residues). Positions 88–97 (PSTRDPRDEG) are enriched in basic and acidic residues. C189 contacts Mo-molybdopterin. A Cytochrome b5 heme-binding domain is found at 538–613 (DKQFTMSEVR…LDTYRIGELI (76 aa)). Residues H573 and H596 each contribute to the heme site. Residues 654-767 (REKVPCRLVD…KGPLGHVEYT (114 aa)) form the FAD-binding FR-type domain. Residues 706-709 (RAYT), 723-727 (LVKVY), F728, F735, 740-742 (LMT), S791, and T794 each bind FAD.

It belongs to the nitrate reductase family. Homodimer. FAD serves as cofactor. Requires heme as cofactor. It depends on Mo-molybdopterin as a cofactor.

It catalyses the reaction nitrite + NAD(+) + H2O = nitrate + NADH + H(+). Its function is as follows. Nitrate reductase is a key enzyme involved in the first step of nitrate assimilation in plants, fungi and bacteria. In Hordeum vulgare (Barley), this protein is Nitrate reductase [NADH].